We begin with the raw amino-acid sequence, 313 residues long: Cytochrome f (313 aa).

Residues 1–31 (MQNMFSFLSNKKIIALFLIIGTIFMPLSSEA) form the signal peptide. Tyr-32, Cys-52, Cys-55, and His-56 together coordinate heme. Residues 279-298 (IKWLIAFLILSTLGQVFLVL) traverse the membrane as a helical segment.

Belongs to the cytochrome f family. As to quaternary structure, the 4 large subunits of the cytochrome b6-f complex are cytochrome b6, subunit IV (17 kDa polypeptide, petD), cytochrome f and the Rieske protein, while the 4 small subunits are PetG, PetL, PetM and PetN. The complex functions as a dimer. Heme is required as a cofactor.

The protein resides in the plastid. Its subcellular location is the chloroplast thylakoid membrane. Component of the cytochrome b6-f complex, which mediates electron transfer between photosystem II (PSII) and photosystem I (PSI), cyclic electron flow around PSI, and state transitions. The sequence is that of Cytochrome f (petA) from Mesostigma viride (Green alga).